A 354-amino-acid polypeptide reads, in one-letter code: Uptake hydrogenase small subunit (354 aa).

Positions 1 to 44 form a signal peptide, tat-type signal; it reads MSQLETXYDVMRRQGITRRSFLKYCSLTGRPCLGPTFAPQIAHA. The [4Fe-4S] cluster site is built by Cys61, Cys64, Cys156, Cys190, His228, Ser231, Cys256, and Cys262. Residues Cys271, Cys290, and Cys293 each contribute to the [3Fe-4S] cluster site.

The protein belongs to the [NiFe]/[NiFeSe] hydrogenase small subunit family. Heterodimer of a large and a small subunit. The cofactor is [4Fe-4S] cluster. [3Fe-4S] cluster is required as a cofactor. In terms of processing, predicted to be exported by the Tat system. The position of the signal peptide cleavage has not been experimentally proven.

It localises to the cell membrane. The catalysed reaction is H2 + A = AH2. In terms of biological role, this enzyme recycles the H(2) produced by nitrogenase to increase the production of ATP and to protect nitrogenase against inhibition or damage by O(2) under carbon- or phosphate-limited conditions. The sequence is that of Uptake hydrogenase small subunit (hupA) from Azotobacter chroococcum mcd 1.